We begin with the raw amino-acid sequence, 76 residues long: Exodeoxyribonuclease 7 small subunit (76 aa).

Belongs to the XseB family. In terms of assembly, heterooligomer composed of large and small subunits.

Its subcellular location is the cytoplasm. The enzyme catalyses Exonucleolytic cleavage in either 5'- to 3'- or 3'- to 5'-direction to yield nucleoside 5'-phosphates.. Functionally, bidirectionally degrades single-stranded DNA into large acid-insoluble oligonucleotides, which are then degraded further into small acid-soluble oligonucleotides. This chain is Exodeoxyribonuclease 7 small subunit, found in Enterococcus faecalis (strain ATCC 700802 / V583).